The primary structure comprises 972 residues: DNA cross-link repair 1A protein (972 aa).

A disordered region spans residues 14-80 (YKSIRKRKPQ…SEDLDPCKDD (67 aa)). Positions 23–37 (QSNPDSTSVSMQTVT) are enriched in polar residues. A compositionally biased stretch (basic residues) spans 39–54 (GKCRPKRKGSGNRKKS). Residues 64–80 (SEQRLRPSEDLDPCKDD) show a composition bias toward basic and acidic residues. A UBZ4-type zinc finger spans residues 105–135 (DGYCPSCQMPFSLLVVQTPRWHVAECLDTPG). Zn(2+)-binding residues include cysteine 108, cysteine 111, histidine 126, and cysteine 130. Disordered stretches follow at residues 191–219 (KSSC…NNEC) and 552–623 (GEAC…TTDE). The segment covering 210–219 (NLKNVPNNEC) has biased composition (polar residues).

The protein belongs to the DNA repair metallo-beta-lactamase (DRMBL) family. Binds PIAS1.

The protein localises to the nucleus. It catalyses the reaction a beta-lactam + H2O = a substituted beta-amino acid. In terms of biological role, may be required for DNA interstrand cross-link repair. This is DNA cross-link repair 1A protein (DCLRE1A) from Gallus gallus (Chicken).